A 208-amino-acid polypeptide reads, in one-letter code: Small ribosomal subunit protein uS4 (208 aa).

In terms of domain architecture, S4 RNA-binding spans 95-161; sequence MRLDALVLRA…VPLQVAAAGA (67 aa).

It belongs to the universal ribosomal protein uS4 family. In terms of assembly, part of the 30S ribosomal subunit. Contacts protein S5. The interaction surface between S4 and S5 is involved in control of translational fidelity.

Its function is as follows. One of the primary rRNA binding proteins, it binds directly to 16S rRNA where it nucleates assembly of the body of the 30S subunit. With S5 and S12 plays an important role in translational accuracy. The sequence is that of Small ribosomal subunit protein uS4 from Pseudarthrobacter chlorophenolicus (strain ATCC 700700 / DSM 12829 / CIP 107037 / JCM 12360 / KCTC 9906 / NCIMB 13794 / A6) (Arthrobacter chlorophenolicus).